Consider the following 173-residue polypeptide: Large ribosomal subunit protein uL16 (173 aa).

Belongs to the universal ribosomal protein uL16 family.

The chain is Large ribosomal subunit protein uL16 from Methanosarcina mazei (strain ATCC BAA-159 / DSM 3647 / Goe1 / Go1 / JCM 11833 / OCM 88) (Methanosarcina frisia).